The following is a 240-amino-acid chain: NADH-quinone oxidoreductase subunit C (240 aa).

Residues 1–82 are disordered; the sequence is MSEEEKPKPK…PVDENRDPEP (82 aa). The segment covering 11 to 20 has biased composition (low complexity); that stretch reads LSPALAAKMA. The span at 67 to 82 shows a compositional bias: basic and acidic residues; the sequence is DKPKAEPVDENRDPEP.

The protein belongs to the complex I 30 kDa subunit family. NDH-1 is composed of 14 different subunits. Subunits NuoB, C, D, E, F, and G constitute the peripheral sector of the complex.

The protein localises to the cell inner membrane. It carries out the reaction a quinone + NADH + 5 H(+)(in) = a quinol + NAD(+) + 4 H(+)(out). Functionally, NDH-1 shuttles electrons from NADH, via FMN and iron-sulfur (Fe-S) centers, to quinones in the respiratory chain. The immediate electron acceptor for the enzyme in this species is believed to be a menaquinone. Couples the redox reaction to proton translocation (for every two electrons transferred, four hydrogen ions are translocated across the cytoplasmic membrane), and thus conserves the redox energy in a proton gradient. This chain is NADH-quinone oxidoreductase subunit C, found in Chloroherpeton thalassium (strain ATCC 35110 / GB-78).